The chain runs to 252 residues: MMPLIHLWTSLPVAKLEVGHHFYWHIGNLKVHGQVFITTWIVMGILIVAALAASRNIQRVPSGIQNLMEYALEFIRDLTKSQMGEHEYRAWVPFVGTLFLFIFVCNWSGALVPWKLIELPEGELAAPTNDINTTVALALLVSLAYFYAGLRKRGLKYFTKYIEPTPVLLPIAILEDFTKPLSLSFRLFGNILADELVVGVLVLLVPLFVPLPVMALGLFTSAIQALVFATLAATYIGEAMEGHGGEHEEAHS.

Helical transmembrane passes span 33–53 (GQVFITTWIVMGILIVAALAA), 92–112 (VPFVGTLFLFIFVCNWSGALV), 130–150 (DINTTVALALLVSLAYFYAGL), 196–216 (LVVGVLVLLVPLFVPLPVMAL), and 217–237 (GLFTSAIQALVFATLAATYIG).

This sequence belongs to the ATPase A chain family. In terms of assembly, F-type ATPases have 2 components, CF(1) - the catalytic core - and CF(0) - the membrane proton channel. CF(1) has five subunits: alpha(3), beta(3), gamma(1), delta(1), epsilon(1). CF(0) has three main subunits: a(1), b(2) and c(9-12). The alpha and beta chains form an alternating ring which encloses part of the gamma chain. CF(1) is attached to CF(0) by a central stalk formed by the gamma and epsilon chains, while a peripheral stalk is formed by the delta and b chains.

It localises to the cellular thylakoid membrane. Key component of the proton channel; it plays a direct role in the translocation of protons across the membrane. The sequence is that of ATP synthase subunit a from Synechococcus sp. (strain PCC 6716).